The primary structure comprises 122 residues: Large ribosomal subunit protein uL18 (122 aa).

It belongs to the universal ribosomal protein uL18 family. Part of the 50S ribosomal subunit; part of the 5S rRNA/L5/L18/L25 subcomplex. Contacts the 5S and 23S rRNAs.

This is one of the proteins that bind and probably mediate the attachment of the 5S RNA into the large ribosomal subunit, where it forms part of the central protuberance. This Mycobacterium leprae (strain TN) protein is Large ribosomal subunit protein uL18.